Consider the following 267-residue polypeptide: Movement protein (267 aa).

The protein belongs to the tobamovirus movement protein family.

The protein localises to the host cytoplasm. It is found in the host cytoskeleton. The protein resides in the host cell junction. It localises to the host plasmodesma. Its function is as follows. Transports viral genome to neighboring plant cells directly through plasmosdesmata, without any budding. The movement protein allows efficient cell to cell propagation, by bypassing the host cell wall barrier. Forms a ribonucleoprotein complex with viral RNA. Binds microtubules and modulates microtubule stability. Can bind double-stranded DNA. This chain is Movement protein (MP), found in Brassicaceae (TVCV).